The following is a 374-amino-acid chain: 4-hydroxy-3-methylbut-2-en-1-yl diphosphate synthase (flavodoxin) (374 aa).

The [4Fe-4S] cluster site is built by Cys268, Cys271, Cys303, and Glu310.

It belongs to the IspG family. Requires [4Fe-4S] cluster as cofactor.

It carries out the reaction (2E)-4-hydroxy-3-methylbut-2-enyl diphosphate + oxidized [flavodoxin] + H2O + 2 H(+) = 2-C-methyl-D-erythritol 2,4-cyclic diphosphate + reduced [flavodoxin]. The protein operates within isoprenoid biosynthesis; isopentenyl diphosphate biosynthesis via DXP pathway; isopentenyl diphosphate from 1-deoxy-D-xylulose 5-phosphate: step 5/6. In terms of biological role, converts 2C-methyl-D-erythritol 2,4-cyclodiphosphate (ME-2,4cPP) into 1-hydroxy-2-methyl-2-(E)-butenyl 4-diphosphate. The chain is 4-hydroxy-3-methylbut-2-en-1-yl diphosphate synthase (flavodoxin) from Geobacillus thermodenitrificans (strain NG80-2).